A 510-amino-acid polypeptide reads, in one-letter code: Bifunctional purine biosynthesis protein PurH (510 aa).

Residues 1–142 enclose the MGS-like domain; sequence MRALLSVSDK…KNYKDVMVLC (142 aa).

The protein belongs to the PurH family.

It carries out the reaction (6R)-10-formyltetrahydrofolate + 5-amino-1-(5-phospho-beta-D-ribosyl)imidazole-4-carboxamide = 5-formamido-1-(5-phospho-D-ribosyl)imidazole-4-carboxamide + (6S)-5,6,7,8-tetrahydrofolate. The catalysed reaction is IMP + H2O = 5-formamido-1-(5-phospho-D-ribosyl)imidazole-4-carboxamide. The protein operates within purine metabolism; IMP biosynthesis via de novo pathway; 5-formamido-1-(5-phospho-D-ribosyl)imidazole-4-carboxamide from 5-amino-1-(5-phospho-D-ribosyl)imidazole-4-carboxamide (10-formyl THF route): step 1/1. It functions in the pathway purine metabolism; IMP biosynthesis via de novo pathway; IMP from 5-formamido-1-(5-phospho-D-ribosyl)imidazole-4-carboxamide: step 1/1. This Campylobacter jejuni subsp. doylei (strain ATCC BAA-1458 / RM4099 / 269.97) protein is Bifunctional purine biosynthesis protein PurH.